The sequence spans 293 residues: tRNA pseudouridine synthase B (293 aa).

Asp39 (nucleophile) is an active-site residue.

The protein belongs to the pseudouridine synthase TruB family. Type 1 subfamily.

It catalyses the reaction uridine(55) in tRNA = pseudouridine(55) in tRNA. Functionally, responsible for synthesis of pseudouridine from uracil-55 in the psi GC loop of transfer RNAs. In Streptococcus thermophilus (strain CNRZ 1066), this protein is tRNA pseudouridine synthase B.